The chain runs to 282 residues: Transcription factor BC1 (282 aa).

A disordered region spans residues 34–123; that stretch reads TTAPAIPEDA…ATDSHSLAER (90 aa). Residues 45–55 show a composition bias toward polar residues; the sequence is METSSVVLDTS. The segment covering 75 to 84 has biased composition (basic and acidic residues); it reads HSKEAKENGR. The Nuclear localization signal signature appears at 109 to 116; sequence ARRGQATD. Residues 113 to 126 are basic motif; degenerate; the sequence is QATDSHSLAERVRR. The 51-residue stretch at 113–163 folds into the bHLH domain; that stretch reads QATDSHSLAERVRRERISERMRMLQALVPGCDKVTGKALILDEIINYVQSL. Residues 127–163 form a helix-loop-helix motif region; it reads ERISERMRMLQALVPGCDKVTGKALILDEIINYVQSL. Residues 219–251 form a disordered region; the sequence is PAQSHAIMDTSNTSPTPYTLQVQGGSNNNSLSQ.

This sequence belongs to the bHLH protein family. In terms of assembly, homodimer. Component of a nuclear cell elongation controlling complex made of ILI5/BUL1, LO9-177 and BC1. Interacts with ILI5/BUL1 only in the presence of LO9-177. Interacts with IBH1. Binds to LO9-177 in the nucleus. Interacts with BCL1. In terms of tissue distribution, preferentially present in anthers and leaves lamina joints. Expressed in seedlings, leaves sheaths, collars and panicles.

It localises to the nucleus. Functionally, transcription activator that contributes, together with LO9-177 and ILI5/BUL1, to the promotion of leaf inclination and grain size by modulating cell elongation. Involved in the RLI1-dependent modulation of leaf inclination by promoting lamina joint cell elongation, especially in response to phosphate (Pi) availability. The protein is Transcription factor BC1 of Oryza sativa subsp. japonica (Rice).